Here is a 193-residue protein sequence, read N- to C-terminus: Bcl-2-like protein 2 (193 aa).

At Ala2 the chain carries N-acetylalanine. The BH4 motif lies at 9 to 29; that stretch reads DTRALVADFVGYKLRQKGYVC. Positions 85 to 104 match the BH1 motif; the sequence is ELFQGGPNWGRLVAFFVFGA. The short motif at 136 to 151 is the BH2 element; it reads DWIHSSGGWAEFTALY.

This sequence belongs to the Bcl-2 family. Interacts with HIF3A isoform 2 (via C-terminus domain). Interacts with BOP. In terms of tissue distribution, expressed in almost all myeloid cell lines and in a wide range of tissues, with highest levels in brain, colon, and salivary gland.

It is found in the mitochondrion membrane. Functionally, promotes cell survival. Blocks dexamethasone-induced apoptosis. Mediates survival of postmitotic Sertoli cells by suppressing death-promoting activity of BAX. In Mus musculus (Mouse), this protein is Bcl-2-like protein 2 (Bcl2l2).